The chain runs to 180 residues: Alpha-S2-casein-like A (180 aa).

Residues 1-15 (MRFFVFTCLLAVALA) form the signal peptide. 2 positions are modified to phosphoserine: Ser23 and Ser25. Residues 46-66 (PTNQETPSVSSSEESVEVQTE) are disordered.

The protein belongs to the alpha-casein family. As to expression, mammary gland specific. Secreted in milk.

The protein resides in the secreted. Functionally, important role in the capacity of milk to transport calcium phosphate. The sequence is that of Alpha-S2-casein-like A (CSN1S2A) from Oryctolagus cuniculus (Rabbit).